The chain runs to 130 residues: Large ribosomal subunit protein bL19 (130 aa).

It belongs to the bacterial ribosomal protein bL19 family.

Functionally, this protein is located at the 30S-50S ribosomal subunit interface and may play a role in the structure and function of the aminoacyl-tRNA binding site. The polypeptide is Large ribosomal subunit protein bL19 (Burkholderia vietnamiensis (strain G4 / LMG 22486) (Burkholderia cepacia (strain R1808))).